Consider the following 1012-residue polypeptide: Putative cellulose synthase-like protein D5 (1012 aa).

The disordered stretch occupies residues 1 to 85 (MSGDYANYTV…APSSNKSLLV (85 aa)). The segment covering 20–37 (PSGGAPPAAPSAGGARPG) has biased composition (low complexity). Over residues 57–69 (GGGDDGAKMDRRL) the composition is skewed to basic and acidic residues. 2 helical membrane passes run 150–170 (ILSPYRLLVLVRFVALFLFLV) and 180–200 (ALWLWGISIVCEFWFAFSWLL). The active site involves Asp280. The segment at 597–620 (PRQGSEAMPGAGGGRSGGGSVGGD) is disordered. Over residues 606 to 618 (GAGGGRSGGGSVG) the composition is skewed to gly residues. Asp717 is an active-site residue. The next 6 helical transmembrane spans lie at 799 to 819 (LFLIMYCLLPALSLFSGQFIV), 825 to 845 (TFLSYLLLITITLMLLCLLEV), 871 to 891 (LAAVLQGLLKVVAGIEISFTL), 914 to 934 (SLFIPPLAVIGINIIALVVGV), 948 to 968 (LLGGGFFSFWVLAHYYPFAKG), and 978 to 998 (TIVYVWAGLISITVSLLWITI).

The protein belongs to the glycosyltransferase 2 family. Plant cellulose synthase-like D subfamily.

The protein resides in the golgi apparatus membrane. Its function is as follows. Thought to be a Golgi-localized beta-glycan synthase that polymerize the backbones of noncellulosic polysaccharides (hemicelluloses) of plant cell wall. The polypeptide is Putative cellulose synthase-like protein D5 (CSLD5) (Oryza sativa subsp. indica (Rice)).